The sequence spans 343 residues: Cilia- and flagella-associated protein 36 (343 aa).

Residues serine 85 and serine 147 each carry the phosphoserine modification. Residues 147–187 are a coiled coil; the sequence is SDLEQEEMKILREVLRKSKEEYDQEEERKRKKQSSEAKMEE. The interval 165 to 188 is disordered; sequence KEEYDQEEERKRKKQSSEAKMEEL. Position 201 is a phosphoserine (serine 201). Basic and acidic residues-rich tracts occupy residues 279 to 293 and 301 to 323; these read QKRD…DTRT and QKGK…AEEK. Positions 279 to 323 are disordered; it reads QKRDKLLSMRKDTRTKQIQNTEQKGKPTREAEEMTEKPEMTAEEK.

This sequence belongs to the CFAP36 family. Interacts with ARL3.

It is found in the nucleus. The protein resides in the cytoplasm. It localises to the cell projection. Its subcellular location is the cilium. The protein localises to the flagellum. In terms of biological role, may act as an effector for ARL3. The protein is Cilia- and flagella-associated protein 36 of Mus musculus (Mouse).